A 607-amino-acid chain; its full sequence is Matrix metalloproteinase-16 (607 aa).

Positions 1 to 31 are cleaved as a signal peptide; it reads MILLAFSSGRRLDFVHRSGVFFLQTLLWILC. Positions 32-119 are excised as a propeptide; sequence ATVCGTEQYF…SSKFNIRRKR (88 aa). Asn-83 carries N-linked (GlcNAc...) asparagine glycosylation. The Cysteine switch motif lies at 99 to 106; sequence PRCGVPDQ. Cys-101 contacts Zn(2+). The Extracellular portion of the chain corresponds to 120-564; that stretch reads YALTGQKWQH…LDNTASTVKA (445 aa). Asp-183 is a binding site for Ca(2+). Residues His-193 and Asp-195 each coordinate Zn(2+). Residues Asp-200, Gly-201, Gly-203, and Phe-205 each coordinate Ca(2+). A Zn(2+)-binding site is contributed by His-208. Ca(2+)-binding residues include Gly-215, Gly-217, and Asp-219. His-221 contributes to the Zn(2+) binding site. Asp-223 and Glu-226 together coordinate Ca(2+). His-246 serves as a coordination point for Zn(2+). The active site involves Glu-247. His-250 and His-256 together coordinate Zn(2+). Residues 281-340 form a disordered region; the sequence is DDLQGIQKIYGPPDKIPPPTRPLPTVPPHRSVPPADPRRHDRPKPPRPPTGRPSYPGAKP. A compositionally biased stretch (pro residues) spans 294-315; sequence DKIPPPTRPLPTVPPHRSVPPA. 4 Hemopexin repeats span residues 340–388, 389–434, 436–484, and 485–532; these read PNIC…WRGL, PPSI…GNGI, PHGI…KGIP, and ESPQ…FMGC. Cys-343 and Cys-532 are oxidised to a cystine. Residues 565–585 form a helical membrane-spanning segment; that stretch reads IAIVIPCILALCLLVLVYTVF. The Cytoplasmic portion of the chain corresponds to 586–607; the sequence is QFKRKGTPRHILYCKRSMQEWV.

It belongs to the peptidase M10A family. Interacts with CSPG4 through CSPG4 chondroitin sulfate glycosaminoglycan. Zn(2+) is required as a cofactor. Ca(2+) serves as cofactor. The precursor is cleaved by a furin endopeptidase.

The protein localises to the cell membrane. Functionally, endopeptidase that degrades various components of the extracellular matrix, such as collagen type III and fibronectin. Activates progelatinase A. Involved in the matrix remodeling of blood vessels. It has no effect on type I, II, IV and V collagen. However, upon interaction with CSPG4, it may be involved in degradation and invasion of type I collagen by melanoma cells. The polypeptide is Matrix metalloproteinase-16 (Mmp16) (Mus musculus (Mouse)).